Reading from the N-terminus, the 165-residue chain is MSLLLPDSGLIFWMLLSFGIVFAVLAKYGFPVIIKMVEGRKTYIDESLEVAREANAQLSRLKEEGEAIVAAANKEQGRIMKEAMQEREKIIYEARKQAEIAAQKELDEVKRQIQIEKDEAIRDIRRQVALLSVDIAEKVIRKNLDDKQEQMGMIDRMLDEVLTKN.

The chain crosses the membrane as a helical span at residues 10–30 (LIFWMLLSFGIVFAVLAKYGF).

Belongs to the ATPase B chain family. F-type ATPases have 2 components, F(1) - the catalytic core - and F(0) - the membrane proton channel. F(1) has five subunits: alpha(3), beta(3), gamma(1), delta(1), epsilon(1). F(0) has three main subunits: a(1), b(2) and c(10-14). The alpha and beta chains form an alternating ring which encloses part of the gamma chain. F(1) is attached to F(0) by a central stalk formed by the gamma and epsilon chains, while a peripheral stalk is formed by the delta and b chains.

It localises to the cell inner membrane. In terms of biological role, f(1)F(0) ATP synthase produces ATP from ADP in the presence of a proton or sodium gradient. F-type ATPases consist of two structural domains, F(1) containing the extramembraneous catalytic core and F(0) containing the membrane proton channel, linked together by a central stalk and a peripheral stalk. During catalysis, ATP synthesis in the catalytic domain of F(1) is coupled via a rotary mechanism of the central stalk subunits to proton translocation. Its function is as follows. Component of the F(0) channel, it forms part of the peripheral stalk, linking F(1) to F(0). This is ATP synthase subunit b from Bacteroides fragilis (strain ATCC 25285 / DSM 2151 / CCUG 4856 / JCM 11019 / LMG 10263 / NCTC 9343 / Onslow / VPI 2553 / EN-2).